The chain runs to 227 residues: Cytidylate kinase (227 aa).

12–20 (GPSGAGKGT) contributes to the ATP binding site.

This sequence belongs to the cytidylate kinase family. Type 1 subfamily.

Its subcellular location is the cytoplasm. It carries out the reaction CMP + ATP = CDP + ADP. The enzyme catalyses dCMP + ATP = dCDP + ADP. In Enterobacter sp. (strain 638), this protein is Cytidylate kinase.